A 799-amino-acid polypeptide reads, in one-letter code: MGASLLLPLRRRPWTCRTCLLQARRSLETAASPATHRAAFDYLPSKNDAQKKSDDDTLRRVFDSQPFWREFSQRSAAHLKPTGLVQNQYLTSPDGFRVFATTTLQKCQAIVAKVLAGTTLEDYQSMARDLDRLSDLLCRVIDLSDFIRVIHPDPRVQEAATQAYALMFEYMNVLNTTTGLNDQLKKAAANPEVTARWSDEEKIVAQILIKDFSNSAIHMPPHARQRFVNLSNDISQLGNTFVNAAEPAKSHVTVSANSLRGLDPILVQQIKRWNRTASVPSMGLIPRLALRSVHDEGVRREVYLATRTSSARQIQRLEQLLAKRAELAQLSGYDSFAHMTLSDKMAKSPEAVSNFLTSLVGSNRPYVQEELAQLQSMKGSAGRLQPWDHAYYVHQRVLQYSQSRRSRELSAVPEFFSLGTVMQGLSRLFDRLYGVRLVPQETAAGETWNSDVRRLDVVDEADRHIAVIYCDLFSRPNKHPNPAHYTLRCAREISAEEVAECATTMDASAHPNDGMATAVDRDAKTLRQLPTIALVCDFPEPPATGTGRPSLLSEHSVRTLFHEMGHALHSILGQTRLQSISGTRCATDFAELPSVLMERFATAPEVLALYARHWETDAPLSESMMQHMEKDRTAHGSIYGAMENESQILMALVDQAYHSLPAGQATSIDSTAVFHQVSAEHCTLPDPTDTKPPTSWQGFFGHLHGYGATYYSYIFDRAIANKLWEDVFQQGKAAVDRQAGERYKNEVLRWGGGRNGWNCVAGVLGSAHPANADGRLVEGGDEAMREVGRWGLGRDGVSE.

Residue His-562 coordinates Zn(2+). Glu-563 is a catalytic residue. Residues His-566 and His-569 each contribute to the Zn(2+) site.

This sequence belongs to the peptidase M3 family. The cofactor is Zn(2+).

It localises to the mitochondrion matrix. It catalyses the reaction Release of an N-terminal octapeptide as second stage of processing of some proteins imported into the mitochondrion.. Its function is as follows. Cleaves proteins, imported into the mitochondrion, to their mature size. While most mitochondrial precursor proteins are processed to the mature form in one step by mitochondrial processing peptidase (MPP), the sequential cleavage by MIP of an octapeptide after initial processing by MPP is a required step for a subgroup of nuclear-encoded precursor proteins destined for the matrix or the inner membrane. This is Mitochondrial intermediate peptidase (oct1) from Aspergillus niger (strain ATCC MYA-4892 / CBS 513.88 / FGSC A1513).